We begin with the raw amino-acid sequence, 245 residues long: Acetylglutamate kinase (245 aa).

Residues 41 to 42, Arg63, and Asn156 each bind substrate; that span reads GG.

The protein belongs to the acetylglutamate kinase family. ArgB subfamily.

Its subcellular location is the cytoplasm. It carries out the reaction N-acetyl-L-glutamate + ATP = N-acetyl-L-glutamyl 5-phosphate + ADP. Its pathway is amino-acid biosynthesis; L-arginine biosynthesis; N(2)-acetyl-L-ornithine from L-glutamate: step 2/4. Functionally, catalyzes the ATP-dependent phosphorylation of N-acetyl-L-glutamate. This is Acetylglutamate kinase from Streptococcus sanguinis (strain SK36).